We begin with the raw amino-acid sequence, 735 residues long: Probable ATP-dependent RNA helicase DHR2 (735 aa).

The span at 1–13 (MAANSNSRVASNH) shows a compositional bias: polar residues. Residues 1-29 (MAANSNSRVASNHTSKKQKVRRNIHPFTN) form a disordered region. The segment covering 14-24 (TSKKQKVRRNI) has biased composition (basic residues). A Helicase ATP-binding domain is found at 91-257 (MSYIESNPVT…FNNAPILFVE (167 aa)). ATP is bound at residue 104–111 (GETGSGKS). The DEAH box motif lies at 203–206 (DEAH). In terms of domain architecture, Helicase C-terminal spans 262 to 456 (DVKQYYLKAP…SPVLMLKRYG (195 aa)).

The protein belongs to the DEAD box helicase family. DEAH subfamily. In terms of assembly, interacts with NOP19. Interacts with UBP10.

The protein resides in the nucleus. It localises to the nucleolus. It carries out the reaction ATP + H2O = ADP + phosphate + H(+). Its function is as follows. Probable ATP-binding RNA helicase. Required for 18S rRNA synthesis. The sequence is that of Probable ATP-dependent RNA helicase DHR2 (DHR2) from Saccharomyces cerevisiae (strain ATCC 204508 / S288c) (Baker's yeast).